We begin with the raw amino-acid sequence, 1241 residues long: Sterol 3-beta-glucosyltransferase (1241 aa).

The span at 1 to 11 (MSGIESTEEPC) shows a compositional bias: acidic residues. Disordered regions lie at residues 1 to 97 (MSGI…KPSI) and 124 to 189 (DQQV…TLRK). Residues 25-34 (PEERQTRKDS) show a composition bias toward basic and acidic residues. The span at 136–155 (ESEDQQADESSDEQEDDDQD) shows a compositional bias: acidic residues. Positions 220–267 (NKLKRTFDISDTDVFISDYPCWLMGDVLLQGHLYITKHHILFFAFLPK) constitute a GRAM 1 domain. One can recognise a PH domain in the interval 271-373 (SISKSGALTT…WVSSLKKHIF (103 aa)). Residues 499-556 (DDFSQEQESAESSKPVSDDEIVSADDNQELEEKQPQDNLANAEKENHDKVSRANSRRT) form a disordered region. Positions 516 to 527 (DDEIVSADDNQE) are enriched in acidic residues. The span at 540–549 (AEKENHDKVS) shows a compositional bias: basic and acidic residues. One can recognise a GRAM 2 domain in the interval 609–675 (ERFRKHFSLT…SDIENVNKEK (67 aa)). Residues 720–741 (KGSTDSSPPNASEGSSDESCNL) form a disordered region. Polar residues predominate over residues 723-741 (TDSSPPNASEGSSDESCNL). Residues Ser797, Arg798, Asp800, Asn1071, Val1098, His1100, His1113, Ser1116, Gly1117, Thr1118, Asp1137, and Gln1138 each contribute to the UDP-alpha-D-glucose site.

This sequence belongs to the glycosyltransferase 28 family.

It is found in the cytoplasm. Its subcellular location is the preautophagosomal structure membrane. It carries out the reaction a sterol + UDP-alpha-D-glucose = a sterol 3-beta-D-glucoside + UDP + H(+). The catalysed reaction is ergosterol + UDP-alpha-D-glucose = ergosteryl 3-beta-D-glucoside + UDP + H(+). Functionally, sterol glycosyltransferase responsible for the glycosylation of ergosterol to form ergosterol-glucoside. Mediates autophagic degradation of peroxisomes (pexophagy). In Pichia angusta (Yeast), this protein is Sterol 3-beta-glucosyltransferase.